A 2637-amino-acid polypeptide reads, in one-letter code: Nonribisomal peptide synthetase valB (2637 aa).

A condensation 1 region spans residues 1–376 (MADGADYTQR…KALIRSPPST (376 aa)). The segment at 413–803 (SQASRRPDAA…VGRRDNQIKL (391 aa)) is adenylation 1. Residues 946–1022 (PPANPPERAL…EAASEIKEPT (77 aa)) form the Carrier 1 domain. O-(pantetheine 4'-phosphoryl)serine is present on Ser-983. The tract at residues 1016–1045 (SEIKEPTDASAPSPSPISRDLPLQKSNHDR) is disordered. Residues 1063-1506 (VEAIYPCTAL…LSRADMSLLQ (444 aa)) form a condensation 2 region. The adenylation 2 stretch occupies residues 1524-1933 (AREVAHQRPL…EGRKDTRVKL (410 aa)). Residues 2078–2154 (KEVTDDQAFM…YMVSKTSVSN (77 aa)) enclose the Carrier 2 domain. Ser-2115 carries the post-translational modification O-(pantetheine 4'-phosphoryl)serine. Residues 2193 to 2582 (ESVAPATDAQ…LWMGAYLDAA (390 aa)) are condensation 3.

This sequence belongs to the NRP synthetase family.

It functions in the pathway secondary metabolite biosynthesis. Functionally, nonribisomal peptide synthetase; part of the gene cluster that mediates the biosynthesis of valactamides. The first step of the pathway is performed by the highly reducing polyketide synthase valA that produces the polyketide part of the final products. An acetyl starter unit is incorporated by the ketosynthase domain of valA, and subsequently 6 malonyl-CoA-derived ketide units are incorporated and fully reduced to their respective alkane forms by the action of the ketoreductase, dehydratase, and enoylreductase domains (except for the penultimate unit, which is reduced only to the alkene). The final five ketide units are each proposed to be alpha-methylated by the methyltransferase domain before ketone reduction by the ketoreductase domain. The C1 domain of the nonribisomal peptide synthetase valB then catalyzes amide bond formation between the heptaketide chain and L-valine (L-Val) attached to the T1 domain. The C2 domain incorporating L-isoleucine (L-Ile) then carries out chain elongation, which is followed by macrolactonization by the Ct domain to release the final product. This Aspergillus terreus protein is Nonribisomal peptide synthetase valB.